Reading from the N-terminus, the 179-residue chain is TPD1 protein homolog 1 (179 aa).

Positions 1-30 (MRMEHIYKFQHWLFFIGLGVLLSLSLSVKA) are cleaved as a signal peptide.

The protein is TPD1 protein homolog 1 of Arabidopsis thaliana (Mouse-ear cress).